The following is a 211-amino-acid chain: Ribosomal RNA small subunit methyltransferase G (211 aa).

S-adenosyl-L-methionine contacts are provided by residues glycine 81, leucine 86, 132 to 133 (VE), and arginine 147.

It belongs to the methyltransferase superfamily. RNA methyltransferase RsmG family.

Its subcellular location is the cytoplasm. The catalysed reaction is guanosine(527) in 16S rRNA + S-adenosyl-L-methionine = N(7)-methylguanosine(527) in 16S rRNA + S-adenosyl-L-homocysteine. Specifically methylates the N7 position of guanine in position 527 of 16S rRNA. This is Ribosomal RNA small subunit methyltransferase G from Actinobacillus succinogenes (strain ATCC 55618 / DSM 22257 / CCUG 43843 / 130Z).